The chain runs to 596 residues: Elongation factor 4 (596 aa).

Residues 2–184 enclose the tr-type G domain; it reads KHIRNFSIIA…VIVEQIPPPE (183 aa). Residues 14 to 19 and 131 to 134 contribute to the GTP site; these read DHGKST and NKID.

This sequence belongs to the TRAFAC class translation factor GTPase superfamily. Classic translation factor GTPase family. LepA subfamily.

The protein resides in the cell inner membrane. It catalyses the reaction GTP + H2O = GDP + phosphate + H(+). Functionally, required for accurate and efficient protein synthesis under certain stress conditions. May act as a fidelity factor of the translation reaction, by catalyzing a one-codon backward translocation of tRNAs on improperly translocated ribosomes. Back-translocation proceeds from a post-translocation (POST) complex to a pre-translocation (PRE) complex, thus giving elongation factor G a second chance to translocate the tRNAs correctly. Binds to ribosomes in a GTP-dependent manner. This Shewanella pealeana (strain ATCC 700345 / ANG-SQ1) protein is Elongation factor 4.